The chain runs to 342 residues: 11-beta-hydroxysteroid dehydrogenase-like 6 (342 aa).

Residues 10–30 (FLFPLLTLYALLVFYPTYQRL) form a helical; Signal-anchor for type II membrane protein membrane-spanning segment. Residues 54–80 (GAAS…VDIR) and Asp105 contribute to the NADP(+) site. Residue Ser184 coordinates substrate. The Proton acceptor role is filled by Tyr197. NADP(+)-binding positions include 197–201 (YCASK) and Lys201.

It belongs to the short-chain dehydrogenases/reductases (SDR) family.

Its subcellular location is the membrane. The protein is 11-beta-hydroxysteroid dehydrogenase-like 6 (HSD6) of Arabidopsis thaliana (Mouse-ear cress).